We begin with the raw amino-acid sequence, 303 residues long: Mycothiol acetyltransferase (303 aa).

2 N-acetyltransferase domains span residues 1-150 (MALL…RPLD) and 162-303 (VTIR…QFGR). Glu-18 contributes to the 1D-myo-inositol 2-(L-cysteinylamino)-2-deoxy-alpha-D-glucopyranoside binding site. Acetyl-CoA is bound at residue 77-79 (LAV). 1D-myo-inositol 2-(L-cysteinylamino)-2-deoxy-alpha-D-glucopyranoside-binding residues include Glu-189, Lys-229, and Glu-237. Residues 241 to 243 (VGV) and 248 to 254 (QGNGLGR) contribute to the acetyl-CoA site. Tyr-275 is a 1D-myo-inositol 2-(L-cysteinylamino)-2-deoxy-alpha-D-glucopyranoside binding site. 280–285 (NTAAIK) contributes to the acetyl-CoA binding site.

Belongs to the acetyltransferase family. MshD subfamily. In terms of assembly, monomer.

It catalyses the reaction 1D-myo-inositol 2-(L-cysteinylamino)-2-deoxy-alpha-D-glucopyranoside + acetyl-CoA = mycothiol + CoA + H(+). In terms of biological role, catalyzes the transfer of acetyl from acetyl-CoA to desacetylmycothiol (Cys-GlcN-Ins) to form mycothiol. The polypeptide is Mycothiol acetyltransferase (Saccharopolyspora erythraea (strain ATCC 11635 / DSM 40517 / JCM 4748 / NBRC 13426 / NCIMB 8594 / NRRL 2338)).